The following is a 396-amino-acid chain: Elongation factor Tu (396 aa).

The region spanning 10–206 is the tr-type G domain; it reads KPHCNIGTIG…TVDAYIPQPE (197 aa). Residues 19-26 form a G1 region; sequence GHVDHGKT. 19-26 contributes to the GTP binding site; it reads GHVDHGKT. Residue T26 participates in Mg(2+) binding. A G2 region spans residues 60–64; the sequence is GITIS. The G3 stretch occupies residues 81–84; it reads DCPG. GTP is bound by residues 81-85 and 136-139; these read DCPGH and NKVD. A G4 region spans residues 136 to 139; sequence NKVD. The interval 174–176 is G5; it reads SAL.

This sequence belongs to the TRAFAC class translation factor GTPase superfamily. Classic translation factor GTPase family. EF-Tu/EF-1A subfamily. Monomer.

It localises to the cytoplasm. The enzyme catalyses GTP + H2O = GDP + phosphate + H(+). In terms of biological role, GTP hydrolase that promotes the GTP-dependent binding of aminoacyl-tRNA to the A-site of ribosomes during protein biosynthesis. This Methylocella silvestris (strain DSM 15510 / CIP 108128 / LMG 27833 / NCIMB 13906 / BL2) protein is Elongation factor Tu.